The primary structure comprises 446 residues: uncharacterized protein (446 aa).

Disordered regions lie at residues 198-233 (SIQK…ENYS), 309-337 (NEDN…DDSK), and 394-431 (SESV…FGNT). Residues 199-224 (IQKQIPKQTQEQTQKQTQEQTQESSQ) are compositionally biased toward low complexity. Acidic residues predominate over residues 317-333 (DNEEDSDESDIESDSDL). Over residues 397–418 (VKSDSNESKSIKPESIKSESIK) the composition is skewed to basic and acidic residues.

This is an uncharacterized protein from Acanthamoeba polyphaga mimivirus (APMV).